A 309-amino-acid polypeptide reads, in one-letter code: Mycothiol acetyltransferase (309 aa).

N-acetyltransferase domains lie at 16–158 and 166–309; these read ETLA…LDLP and VSVR…RTET. Glu-47 serves as a coordination point for 1D-myo-inositol 2-(L-cysteinylamino)-2-deoxy-alpha-D-glucopyranoside. Residue 92–94 coordinates acetyl-CoA; sequence LVV. 1D-myo-inositol 2-(L-cysteinylamino)-2-deoxy-alpha-D-glucopyranoside contacts are provided by Glu-193, Lys-232, and Glu-241. Acetyl-CoA-binding positions include 245-247 and 252-258; these read LGI and QGGGLGK. Position 279 (Tyr-279) interacts with 1D-myo-inositol 2-(L-cysteinylamino)-2-deoxy-alpha-D-glucopyranoside.

The protein belongs to the acetyltransferase family. MshD subfamily. In terms of assembly, monomer.

The catalysed reaction is 1D-myo-inositol 2-(L-cysteinylamino)-2-deoxy-alpha-D-glucopyranoside + acetyl-CoA = mycothiol + CoA + H(+). Its function is as follows. Catalyzes the transfer of acetyl from acetyl-CoA to desacetylmycothiol (Cys-GlcN-Ins) to form mycothiol. The sequence is that of Mycothiol acetyltransferase from Streptomyces coelicolor (strain ATCC BAA-471 / A3(2) / M145).